Reading from the N-terminus, the 37-residue chain is Large ribosomal subunit protein bL36 (37 aa).

This sequence belongs to the bacterial ribosomal protein bL36 family.

In Endomicrobium trichonymphae, this protein is Large ribosomal subunit protein bL36.